A 485-amino-acid chain; its full sequence is Telomeric DNA-binding factor trf1 (485 aa).

Residues 1–20 show a composition bias toward basic and acidic residues; that stretch reads MSKRSLDPSDDFKGQKRLAI. The disordered stretch occupies residues 1 to 23; the sequence is MSKRSLDPSDDFKGQKRLAIDPE. The 58-residue stretch at 400 to 457 folds into the HTH myb-type domain; it reads RRVANRRSWTKEEEEALLDGLDLVKGPRWSQILELYGPGGKKSEVLKYRNQVQLKDKA. Residues 428-453 constitute a DNA-binding region (H-T-H motif); the sequence is WSQILELYGPGGKKSEVLKYRNQVQL.

As to quaternary structure, homodimer.

It localises to the nucleus. Functionally, binds the telomeric double-stranded TTACAGG repeat and regulates telomere length. This Schizosaccharomyces pombe (strain 972 / ATCC 24843) (Fission yeast) protein is Telomeric DNA-binding factor trf1 (trf1).